Reading from the N-terminus, the 189-residue chain is MTSPSPTARRTRLRRRTALALAAAATAALTLSACGTDTKANTPATRAGSGNAAAAKADTVALLDDTTLAVPGDKPSALFFFSVGCGECAGGAKSLDKAAQAFDKAGKKANFLAVDMDPNESKQTIMQFLDYIKAPALPATIDKGAALSQRYQVAALSTLIVVAPQGKVTYRATDPSADQIQDALKKAGA.

Residues Met-1–Ala-27 constitute a signal peptide (tat-type signal). A Thioredoxin domain is found at Thr-38 to Ala-189.

In terms of processing, predicted to be exported by the Tat system. The position of the signal peptide cleavage has not been experimentally proven.

It localises to the secreted. Functionally, probable mercury binding protein. The chain is Mercury resistance operon ORF3 from Streptomyces lividans.